Consider the following 773-residue polypeptide: Immunoglobulin domain and leucine-rich repeat-containing protein 2 (773 aa).

The N-terminal stretch at 1-20 (MRKFVFFVVAILIQIHTTTS) is a signal peptide. Residues 21 to 493 (QRNRSSSPSG…DWYSYDVFNS (473 aa)) are Extracellular-facing. LRR repeat units lie at residues 52–73 (TRNI…KIYG), 74–96 (SNIQ…IFAP), 97–120 (FPQL…VIHP), 122–144 (LKVL…LLSI), 145–167 (FPKI…DTSN), and 168–191 (TKLK…TLRV). An N-linked (GlcNAc...) asparagine glycan is attached at Asn-114. N-linked (GlcNAc...) asparagine glycosylation occurs at Asn-204. 4 LRR repeats span residues 206-230 (STKL…DWKF), 233-251 (LRSL…QLDA), 252-275 (PLLN…ILTP), and 296-319 (PSTV…FIPM). In terms of domain architecture, Ig-like spans 349–479 (PVYAQTSIRK…GKDYGIYHFR (131 aa)). Residues Asn-361 and Asn-379 are each glycosylated (N-linked (GlcNAc...) asparagine). Cysteines 396 and 463 form a disulfide. Residues 494–514 (VFWGGLATSLIVCLISFLLNI) traverse the membrane as a helical segment. At 515–773 (TWILTRKSAL…RSPDSPPEKR (259 aa)) the chain is on the cytoplasmic side. The interval 725–773 (VRPGIIPTNAPSIRFTTKPTTSSISNEASTSSPSSSGAHRSPDSPPEKR) is disordered. Residues 733–745 (NAPSIRFTTKPTT) show a composition bias toward polar residues. The segment covering 746 to 763 (SSISNEASTSSPSSSGAH) has biased composition (low complexity). Residues 764–773 (RSPDSPPEKR) are compositionally biased toward basic and acidic residues.

The protein localises to the membrane. The polypeptide is Immunoglobulin domain and leucine-rich repeat-containing protein 2 (Caenorhabditis elegans).